The primary structure comprises 336 residues: Immune-associated nucleotide-binding protein 6 (336 aa).

The AIG1-type G domain maps to 33–241; the sequence is EPVKNVVLVG…FTDTMHRRIQ (209 aa). Residues 42–49 form a G1 region; the sequence is GRTGNGKS. GTP-binding positions include 42–50 and serine 63; that span reads GRTGNGKSA. The tract at residues 69-73 is G2; that stretch reads GVTTR. The interval 91–94 is G3; that stretch reads DTPG. A G4 region spans residues 161–164; that stretch reads TCGD. The tract at residues 200 to 202 is G5; that stretch reads DNR. Asparagine 201 provides a ligand contact to GTP. Residues 237–270 are a coiled coil; it reads HRRIQEEAARVKREEKEIEEKNIADEEKAALKKQ.

It belongs to the TRAFAC class TrmE-Era-EngA-EngB-Septin-like GTPase superfamily. AIG1/Toc34/Toc159-like paraseptin GTPase family. IAN subfamily. As to expression, mostly expressed in pollen. Also detected in lateral roots and radicles.

The sequence is that of Immune-associated nucleotide-binding protein 6 from Arabidopsis thaliana (Mouse-ear cress).